We begin with the raw amino-acid sequence, 296 residues long: Bidirectional sugar transporter SWEET13 (296 aa).

Topologically, residues 1–9 are extracellular; sequence MAGLSLQHP. A helical membrane pass occupies residues 10–30; that stretch reads WAFAFGLLGNLISFTTYLAPI. Positions 13-98 constitute a MtN3/slv 1 domain; it reads AFGLLGNLIS…VMYLAYAPKK (86 aa). The Cytoplasmic portion of the chain corresponds to 31-45; that stretch reads PTFYRIYKSKSTEGF. The helical transmembrane segment at 46-66 threads the bilayer; sequence QSVPYVVALFSAMLWIFYALI. Residues 67-71 lie on the Extracellular side of the membrane; sequence KSNEA. The helical transmembrane segment at 72–92 threads the bilayer; the sequence is LLITINAAGCVIETIYIVMYL. Over 93–105 the chain is Cytoplasmic; sequence AYAPKKAKVFTTK. Residues 106 to 126 form a helical membrane-spanning segment; the sequence is ILLLLNVGVFGVILLLTLLLS. Topologically, residues 127 to 133 are extracellular; the sequence is HGEQRVV. The helical transmembrane segment at 134–154 threads the bilayer; that stretch reads SLGWVCVAFSVSVFVAPLSII. The 84-residue stretch at 134–217 folds into the MtN3/slv 2 domain; it reads SLGWVCVAFS…MGLYVFYMNA (84 aa). Topologically, residues 155-167 are cytoplasmic; the sequence is KRVIQSRSVEYMP. Residues 168–188 traverse the membrane as a helical segment; sequence FSLSLTLTLSAVVWFLYGLLI. Residues 189 to 192 are Extracellular-facing; the sequence is KDKY. The helical transmembrane segment at 193 to 213 threads the bilayer; that stretch reads VALPNILGFTFGVVQMGLYVF. At 214–296 the chain is on the cytoplasmic side; it reads YMNATPVAGE…PPRAVEVAAV (83 aa).

Belongs to the SWEET sugar transporter family. As to quaternary structure, forms homooligomers and/or heterooligomers.

Its subcellular location is the cell membrane. Its function is as follows. Mediates both low-affinity uptake and efflux of sugar across the plasma membrane. In terms of biological role, confers blight susceptibility. Confers TAL effector-mediated susceptibility to Xanthomonas oryzae pv. oryzae. This Oryza sativa subsp. japonica (Rice) protein is Bidirectional sugar transporter SWEET13 (SWEET13).